We begin with the raw amino-acid sequence, 618 residues long: Dihydroxy-acid dehydratase (618 aa).

D81 provides a ligand contact to Mg(2+). C122 provides a ligand contact to [2Fe-2S] cluster. Residues D123 and K124 each coordinate Mg(2+). At K124 the chain carries N6-carboxylysine. Residue C195 participates in [2Fe-2S] cluster binding. E492 contacts Mg(2+). S518 (proton acceptor) is an active-site residue.

Belongs to the IlvD/Edd family. In terms of assembly, homodimer. It depends on [2Fe-2S] cluster as a cofactor. Requires Mg(2+) as cofactor.

It carries out the reaction (2R)-2,3-dihydroxy-3-methylbutanoate = 3-methyl-2-oxobutanoate + H2O. The enzyme catalyses (2R,3R)-2,3-dihydroxy-3-methylpentanoate = (S)-3-methyl-2-oxopentanoate + H2O. It functions in the pathway amino-acid biosynthesis; L-isoleucine biosynthesis; L-isoleucine from 2-oxobutanoate: step 3/4. The protein operates within amino-acid biosynthesis; L-valine biosynthesis; L-valine from pyruvate: step 3/4. Its function is as follows. Functions in the biosynthesis of branched-chain amino acids. Catalyzes the dehydration of (2R,3R)-2,3-dihydroxy-3-methylpentanoate (2,3-dihydroxy-3-methylvalerate) into 2-oxo-3-methylpentanoate (2-oxo-3-methylvalerate) and of (2R)-2,3-dihydroxy-3-methylbutanoate (2,3-dihydroxyisovalerate) into 2-oxo-3-methylbutanoate (2-oxoisovalerate), the penultimate precursor to L-isoleucine and L-valine, respectively. This Zymomonas mobilis subsp. mobilis (strain ATCC 31821 / ZM4 / CP4) protein is Dihydroxy-acid dehydratase.